Consider the following 804-residue polypeptide: Cyclic di-GMP-binding protein (804 aa).

The signal sequence occupies residues 1-18; that stretch reads MKMVSLIALLVFATGAQA. Residues 19-766 are Periplasmic-facing; that stretch reads APIASKAPAH…DWYMHNHPFR (748 aa). Residues 24–69 are disordered; the sequence is KAPAHQPTGSDLPPLPAAAPVAPAAQPSAQAVDPASAAPASDAGSA. A helical transmembrane segment spans residues 767 to 787; sequence VIVVGLVGCLLVVAVLVRALF. Over 788–804 the chain is Cytoplasmic; sequence RHAMFRRRQLQEERQKS.

Belongs to the AcsB/BcsB family. In terms of assembly, tightly associated with the cellulose synthase catalytic subunit.

It is found in the cell inner membrane. The protein operates within glycan metabolism; bacterial cellulose biosynthesis. Its function is as follows. Binds the cellulose synthase activator, bis-(3'-5') cyclic diguanylic acid (c-di-GMP). This is Cyclic di-GMP-binding protein (bcsBI) from Komagataeibacter xylinus (Gluconacetobacter xylinus).